A 257-amino-acid chain; its full sequence is Pyridoxine 5'-phosphate synthase (257 aa).

Residue Asn-6 coordinates 3-amino-2-oxopropyl phosphate. 8 to 9 (DH) contributes to the 1-deoxy-D-xylulose 5-phosphate binding site. Residue Arg-17 coordinates 3-amino-2-oxopropyl phosphate. His-42 (proton acceptor) is an active-site residue. Residues Arg-44 and His-49 each contribute to the 1-deoxy-D-xylulose 5-phosphate site. Glu-69 (proton acceptor) is an active-site residue. Residue Thr-99 participates in 1-deoxy-D-xylulose 5-phosphate binding. The Proton donor role is filled by His-211. Residues Gly-212 and 233–234 (GQ) contribute to the 3-amino-2-oxopropyl phosphate site.

It belongs to the PNP synthase family. In terms of assembly, homooctamer; tetramer of dimers.

It is found in the cytoplasm. It carries out the reaction 3-amino-2-oxopropyl phosphate + 1-deoxy-D-xylulose 5-phosphate = pyridoxine 5'-phosphate + phosphate + 2 H2O + H(+). Its pathway is cofactor biosynthesis; pyridoxine 5'-phosphate biosynthesis; pyridoxine 5'-phosphate from D-erythrose 4-phosphate: step 5/5. Functionally, catalyzes the complicated ring closure reaction between the two acyclic compounds 1-deoxy-D-xylulose-5-phosphate (DXP) and 3-amino-2-oxopropyl phosphate (1-amino-acetone-3-phosphate or AAP) to form pyridoxine 5'-phosphate (PNP) and inorganic phosphate. This chain is Pyridoxine 5'-phosphate synthase, found in Campylobacter fetus subsp. fetus (strain 82-40).